The following is a 91-amino-acid chain: RNA-binding protein Hfq (91 aa).

Residues Asp-9–Phe-68 form the Sm domain. The disordered stretch occupies residues Arg-66–Gln-91. Residues Gly-71–Gln-91 show a composition bias toward polar residues.

Belongs to the Hfq family. Homohexamer.

Functionally, RNA chaperone that binds small regulatory RNA (sRNAs) and mRNAs to facilitate mRNA translational regulation in response to envelope stress, environmental stress and changes in metabolite concentrations. Also binds with high specificity to tRNAs. The polypeptide is RNA-binding protein Hfq (Shewanella amazonensis (strain ATCC BAA-1098 / SB2B)).